We begin with the raw amino-acid sequence, 80 residues long: Acyl carrier protein (80 aa).

The Carrier domain maps to 1–76 (MTLEEKIIEI…DVIDYLKVRN (76 aa)). Ser36 is modified (O-(pantetheine 4'-phosphoryl)serine).

Belongs to the acyl carrier protein (ACP) family. Post-translationally, 4'-phosphopantetheine is transferred from CoA to a specific serine of apo-ACP by AcpS. This modification is essential for activity because fatty acids are bound in thioester linkage to the sulfhydryl of the prosthetic group.

It localises to the cytoplasm. It participates in lipid metabolism; fatty acid biosynthesis. Carrier of the growing fatty acid chain in fatty acid biosynthesis. This Syntrophus aciditrophicus (strain SB) protein is Acyl carrier protein.